We begin with the raw amino-acid sequence, 606 residues long: Albumin A (606 aa).

The N-terminal stretch at 1 to 18 (MKWITLICLLISSTLIES) is a signal peptide. Residues 19–24 (RIIFKR) constitute a propeptide that is removed on maturation. Albumin domains follow at residues 22–211 (FKRD…ELMK), 212–401 (HSHS…RFMN), and 402–599 (EAKE…VLIE). H30 lines the Cu cation pocket. Disulfide bonds link C80–C89, C102–C118, C117–C128, C148–C193, C192–C201, C224–C270, C269–C277, C289–C303, C302–C313, C340–C383, C382–C391, C414–C460, C459–C470, C483–C499, C498–C509, C536–C581, and C580–C589.

This sequence belongs to the ALB/AFP/VDB family. In terms of tissue distribution, plasma.

The protein localises to the secreted. Binds water, Ca(2+), Na(+), K(+), fatty acids, hormones, bilirubin and drugs. Its main function is the regulation of the colloidal osmotic pressure of blood. The chain is Albumin A (alb-a) from Xenopus laevis (African clawed frog).